The primary structure comprises 274 residues: Penicillin-insensitive murein endopeptidase (274 aa).

Positions 1 to 19 (MNKTAIALLALLASSASLA) are cleaved as a signal peptide. Cystine bridges form between Cys44–Cys265, Cys187–Cys235, and Cys216–Cys223. Residues His110, His113, Asp120, Asp147, His150, and His211 each contribute to the Zn(2+) site. A disordered region spans residues 227 to 274 (PLPPPGDGCGAELQSWFEPPKPGTTKPEKKTPPPLPPSCQALLDEHVI).

It belongs to the peptidase M74 family. In terms of assembly, dimer. The cofactor is Zn(2+).

It is found in the periplasm. In terms of biological role, murein endopeptidase that cleaves the D-alanyl-meso-2,6-diamino-pimelyl amide bond that connects peptidoglycan strands. Likely plays a role in the removal of murein from the sacculus. This Escherichia coli O6:K15:H31 (strain 536 / UPEC) protein is Penicillin-insensitive murein endopeptidase.